Reading from the N-terminus, the 359-residue chain is uncharacterized protein (359 aa).

The next 6 membrane-spanning stretches (helical) occupy residues 4-24 (ELFV…HLFK), 36-56 (FQAV…VFGF), 68-88 (IPIM…ALAM), 94-114 (LLIT…IAAI), 129-149 (HAFY…YFLI), and 155-175 (ELHL…LYII). Positions 223-357 (FQFALIYMDI…GRNRVCFSEK (135 aa)) constitute a GGDEF domain.

Its subcellular location is the cell membrane. This is an uncharacterized protein from Bacillus subtilis (strain 168).